The sequence spans 167 residues: Homeobox protein EgHBX3 (167 aa).

The segment at residues 80 to 139 (SQSKRRVLFNKFQISQLEKRLKQRYLTAQERQELAHTIGLTPTQVKIWFQNHAYKMKRLF) is a DNA-binding region (homeobox).

Belongs to the NK-2 homeobox family.

The protein localises to the nucleus. The chain is Homeobox protein EgHBX3 (HBX3) from Echinococcus granulosus (Hydatid tapeworm).